A 347-amino-acid polypeptide reads, in one-letter code: MTNESRKRKVRGSQIRSSRGDKKQGRSQSRDDKEIERLERQNDARGQESSTHVDEGFVPEEQSFIETESVNRVESRMERWLDVGRPVHLIGPTGCGKTSLAMHVARERDRPVVWINGDAELTTSDLVGEYAEKERISEHDQFIHNVVKSKDIIRDRWVDNPLTLAVQEGATLVYNEFSRTKPVANNVLLSVFEEGVLELPGKRGKSRYVDVHPEFRTILTSNSVEYAGVHEPQDALLDRLIGIYMDFYDLDTEIEIVRAHVDKSADTNVEDIVRVLRELRERLDITVGTRAAIMANEGATTVDTVDQAVLTDICTDVLASKVAQRSDVRGLREEIESAIDDMEVALS.

Residues 1-11 (MTNESRKRKVR) are compositionally biased toward basic residues. Residues 1 to 64 (MTNESRKRKV…EGFVPEEQSF (64 aa)) are disordered. Residues 18 to 55 (SRGDKKQGRSQSRDDKEIERLERQNDARGQESSTHVDE) are compositionally biased toward basic and acidic residues. 91-98 (GPTGCGKT) contacts ATP.

It belongs to the CbbQ/NirQ/NorQ/GpvN family. Forms homodimers, forms a GvpN1-GvpO1 heterodimer, interacts with GvpC1 (via the latter's C-terminus) and GvpL, might interact with GvpA1.

The protein localises to the gas vesicle. The protein resides in the cytoplasm. The enzyme catalyses ATP + H2O = ADP + phosphate + H(+). Its function is as follows. An ATPase that functions in gas vesicle formation. A minor component of the gas vesicle, also found in soluble extracts. Probably enhances gas vesicle formation. Gas vesicles are hollow, gas filled proteinaceous nanostructures found in several microbial planktonic microorganisms. They allow positioning of halobacteria at the optimal depth for growth in the poorly aerated, shallow brine pools of their habitat. In terms of biological role, expression of a 9.5 kb p-vac DNA fragment containing 2 divergently transcribed regions (gvpD-gvpE-gvpF-gvpG-gvpH-gvpI-gvpJ-gvpK-gvpL-gvpM and gvpA-gvpC-gvpN-gvpO) allows H.volcanii to produce gas vesicles. A similar region restores gas vesicle production in H.halobium without the p-vac locus, but which still have the c-vac locus. The sequence is that of Gas vesicle ATPase GvpN1 (gvpN11) from Halobacterium salinarum (strain ATCC 700922 / JCM 11081 / NRC-1) (Halobacterium halobium).